Here is a 58-residue protein sequence, read N- to C-terminus: UPF0391 membrane protein Sbal195_1447 (58 aa).

2 consecutive transmembrane segments (helical) span residues 6 to 26 and 28 to 48; these read LVFL…IAGA and AGIA…SLLV.

It belongs to the UPF0391 family.

The protein localises to the cell membrane. The chain is UPF0391 membrane protein Sbal195_1447 from Shewanella baltica (strain OS195).